The sequence spans 137 residues: Phosphoribosyl-AMP cyclohydrolase (137 aa).

Asp84 provides a ligand contact to Mg(2+). Position 85 (Cys85) interacts with Zn(2+). Residues Asp86 and Asp88 each contribute to the Mg(2+) site. Cys101 and Cys108 together coordinate Zn(2+).

The protein belongs to the PRA-CH family. As to quaternary structure, homodimer. Mg(2+) serves as cofactor. Requires Zn(2+) as cofactor.

The protein resides in the cytoplasm. It catalyses the reaction 1-(5-phospho-beta-D-ribosyl)-5'-AMP + H2O = 1-(5-phospho-beta-D-ribosyl)-5-[(5-phospho-beta-D-ribosylamino)methylideneamino]imidazole-4-carboxamide. It participates in amino-acid biosynthesis; L-histidine biosynthesis; L-histidine from 5-phospho-alpha-D-ribose 1-diphosphate: step 3/9. Catalyzes the hydrolysis of the adenine ring of phosphoribosyl-AMP. This chain is Phosphoribosyl-AMP cyclohydrolase, found in Pelodictyon phaeoclathratiforme (strain DSM 5477 / BU-1).